A 232-amino-acid chain; its full sequence is UPF0758 protein BH3032 (232 aa).

Residues V107–L229 form the MPN domain. 3 residues coordinate Zn(2+): H178, H180, and D191. The JAMM motif signature appears at H178–D191.

It belongs to the UPF0758 family.

In Halalkalibacterium halodurans (strain ATCC BAA-125 / DSM 18197 / FERM 7344 / JCM 9153 / C-125) (Bacillus halodurans), this protein is UPF0758 protein BH3032.